Here is a 317-residue protein sequence, read N- to C-terminus: Endochitinase 3 (317 aa).

The signal sequence occupies residues 1–19 (MFVRNALVVTGLLAALTQA). N-linked (GlcNAc...) asparagine glycosylation is found at Asn-25, Asn-49, and Asn-169. A GH18 domain is found at 29–317 (HKLTVYWGAE…NYQKEIKANL (289 aa)). Glu-170 (proton donor) is an active-site residue. Residue Asn-245 is glycosylated (N-linked (GlcNAc...) asparagine).

This sequence belongs to the glycosyl hydrolase 18 family. Chitinase class III subfamily.

The protein resides in the secreted. It carries out the reaction Random endo-hydrolysis of N-acetyl-beta-D-glucosaminide (1-&gt;4)-beta-linkages in chitin and chitodextrins.. Secreted chitinase involved in the degradation of chitin, a component of the cell walls of fungi and exoskeletal elements of some animals (including worms and arthropods). Participates in the infection process and directly acts in the penetration process of the host cuticle. Involved in heat-shock adaptation. In Metarhizium robertsii (strain ARSEF 23 / ATCC MYA-3075) (Metarhizium anisopliae (strain ARSEF 23)), this protein is Endochitinase 3 (chi3).